The chain runs to 248 residues: 2,3-bisphosphoglycerate-dependent phosphoglycerate mutase (248 aa).

Residues 8 to 15 (RHGESTWN), 21 to 22 (TG), arginine 60, 87 to 90 (ERHY), lysine 98, 114 to 115 (RR), and 183 to 184 (GN) each bind substrate. The Tele-phosphohistidine intermediate role is filled by histidine 9. Glutamate 87 functions as the Proton donor/acceptor in the catalytic mechanism.

This sequence belongs to the phosphoglycerate mutase family. BPG-dependent PGAM subfamily. Homodimer.

The enzyme catalyses (2R)-2-phosphoglycerate = (2R)-3-phosphoglycerate. The protein operates within carbohydrate degradation; glycolysis; pyruvate from D-glyceraldehyde 3-phosphate: step 3/5. In terms of biological role, catalyzes the interconversion of 2-phosphoglycerate and 3-phosphoglycerate. The chain is 2,3-bisphosphoglycerate-dependent phosphoglycerate mutase from Burkholderia lata (strain ATCC 17760 / DSM 23089 / LMG 22485 / NCIMB 9086 / R18194 / 383).